A 122-amino-acid polypeptide reads, in one-letter code: Large ribosomal subunit protein uL18 (122 aa).

Basic residues predominate over residues 1–21 (MSKLSRKQQTQKRHRRLRRHL). The disordered stretch occupies residues 1-26 (MSKLSRKQQTQKRHRRLRRHLTGTSD).

Belongs to the universal ribosomal protein uL18 family. In terms of assembly, part of the 50S ribosomal subunit; part of the 5S rRNA/L5/L18/L25 subcomplex. Contacts the 5S and 23S rRNAs.

This is one of the proteins that bind and probably mediate the attachment of the 5S RNA into the large ribosomal subunit, where it forms part of the central protuberance. This chain is Large ribosomal subunit protein uL18, found in Parasynechococcus marenigrum (strain WH8102).